The following is a 787-amino-acid chain: LPS-assembly protein LptD (787 aa).

The signal sequence occupies residues 1–39 (MPPKTLFPLVPACDAAPRKKRLAVALLAVPGLVPAVSQA).

This sequence belongs to the LptD family. In terms of assembly, component of the lipopolysaccharide transport and assembly complex. Interacts with LptE and LptA.

Its subcellular location is the cell outer membrane. Functionally, together with LptE, is involved in the assembly of lipopolysaccharide (LPS) at the surface of the outer membrane. The protein is LPS-assembly protein LptD of Burkholderia pseudomallei (strain 1710b).